The primary structure comprises 155 residues: Endoribonuclease YbeY (155 aa).

Residues His-114, His-118, and His-124 each coordinate Zn(2+).

This sequence belongs to the endoribonuclease YbeY family. Zn(2+) is required as a cofactor.

The protein resides in the cytoplasm. Its function is as follows. Single strand-specific metallo-endoribonuclease involved in late-stage 70S ribosome quality control and in maturation of the 3' terminus of the 16S rRNA. This is Endoribonuclease YbeY from Proteus mirabilis (strain HI4320).